We begin with the raw amino-acid sequence, 412 residues long: Shaggy-related protein kinase zeta (412 aa).

Residues 1 to 19 show a composition bias toward pro residues; that stretch reads MTSIPLGPPQPPSLAPQPP. The segment at 1 to 33 is disordered; sequence MTSIPLGPPQPPSLAPQPPHLHGGDSLKRRPDI. The segment covering 22–33 has biased composition (basic and acidic residues); that stretch reads HGGDSLKRRPDI. Serine 26 carries the phosphoserine modification. The region spanning 72-356 is the Protein kinase domain; sequence YMAERVVGTG…ALEACAHPFF (285 aa). ATP-binding positions include 78 to 86 and lysine 101; that span reads VGTGSFGIV. The residue at position 127 (serine 127) is a Phosphoserine. 2 positions are modified to phosphothreonine: threonine 136 and threonine 137. Aspartate 197 acts as the Proton acceptor in catalysis. Phosphoserine is present on serine 219. At tyrosine 232 the chain carries Phosphotyrosine. At serine 252 the chain carries Phosphoserine. Threonine 293 is subject to Phosphothreonine. Serine 342 is modified (phosphoserine). Threonine 346 bears the Phosphothreonine mark.

It belongs to the protein kinase superfamily. CMGC Ser/Thr protein kinase family. GSK-3 subfamily. In terms of assembly, binds to KIB1. Interacts with beet curly top virus AL4/C4 and tomato golden mosaic virus AL4/AC4. Post-translationally, autophosphorylated mainly on threonine and serine residues.

The enzyme catalyses L-seryl-[protein] + ATP = O-phospho-L-seryl-[protein] + ADP + H(+). It catalyses the reaction L-threonyl-[protein] + ATP = O-phospho-L-threonyl-[protein] + ADP + H(+). In terms of biological role, may mediate extracellular signals to regulate transcription in differentiating cells. This Arabidopsis thaliana (Mouse-ear cress) protein is Shaggy-related protein kinase zeta (ASK6).